We begin with the raw amino-acid sequence, 417 residues long: MTREHFLEGKDIVVAGAGVAGLAFALNLQRQWGDNVPPLRVVVYDRDKREVDLRRQGYSQTLSGIKEDTGLVVLKQLGLLDKVIDGAVMTDAISKFTIWDKDWNASPSFNVPAYGDMPTSAVRIPRRVLRTILIEAAEAAGIEVHWSVSCEDFEYLDDGRVGIRLRNADDGEIIETRACDLLVAADGANSKIRTILRPDDTLQYTGLMMMGGVAEFPHGAVPDHIRDKWGMVLTDQGISCFLSPTSQMGYHWGLSWWEQSPRAPPATWSIEYTQSLKSEALRRSRVIADPFATIVKRTDPSTMFIMAGMDKRPFSHEHLRKVVFIGDSNHAFSPLAGNGANVALKDGYDLAEQLCKASCMDDAISQFDRESVPRALRTLDRSHERIASAHTTQLDRDQFTDGSGANDFLVGQQHSDK.

FAD contacts are provided by residues 45-48, Arg-126, and Asp-327; that span reads DRDK. A compositionally biased stretch (basic and acidic residues) spans 389–399; sequence AHTTQLDRDQF. The tract at residues 389-417 is disordered; the sequence is AHTTQLDRDQFTDGSGANDFLVGQQHSDK.

Belongs to the aromatic-ring hydroxylase family. KMO subfamily. Requires FAD as cofactor.

Its pathway is secondary metabolite biosynthesis; flavonoid biosynthesis. Its function is as follows. Monooxygenase; part of the gene cluster that mediates the biosynthesis of chlorflavonin, a fungal flavonoid with acetolactate synthase inhibitory activity. Within the pathway, cfoF is responsible for the hydroxylation of the flavonoid skeleton at position C3. The pathway begins with the PKS-NRPS hybrid synthetase cfoA that uses benzoic acid or p-hydroxybenzoic acid as a starter unit with four rounds of chain elongation using malonyl-CoA to form the chalcone skeleton. Then, a new type of chalcone isomerase, cfoK, catalyzes the conversion of the chalcone into a flavanone by a histidine-mediated oxa-Michael addition mechanism. The desaturation of flavanone to flavone is catalyzed by a new type of flavone synthase, the flavin mononucleotide (FMN)-dependent oxidoreductase cfoJ. Monooxygenases cfoF, cfoG, and P450 cfoH are responsible for the hydroxylation of the flavonoid skeleton at sites C3, C8, and C2', respectively. Like cfoF, the dehydratase cfoI plays also a role in the hydroxylation of position C3. Methyltransferases cfoB, cfoC, and cfoD then catalyze the methylation of C7-OH, C8-OH, and C3-OH, respectively. Finally, the monooxygenase cfoE is responsible for the chlorination of flavonoid at position C3'. This is Monooxygenase cfoF from Aspergillus candidus.